A 172-amino-acid polypeptide reads, in one-letter code: Type VI secretion system sheath protein TssB1 (172 aa).

As to quaternary structure, forms a heterodimer with TssC1. Heterodimers assemble to form the sheath of the T6SS machinery. Interacts with TagJ. Interacts with TssA1.

In terms of biological role, core component of the H1 type VI (H1-T6SS) secretion system that plays a role in the release of toxins targeting both eukaryotic and prokaryotic species. Forms the sheath of the structure by assembling into tubules together with TssC1 resulting in the stacking of cogwheel-like structures showing predominantly a 12-fold symmetry. The sheath contracts to provide the energy needed for effector delivery. This chain is Type VI secretion system sheath protein TssB1, found in Pseudomonas aeruginosa (strain ATCC 15692 / DSM 22644 / CIP 104116 / JCM 14847 / LMG 12228 / 1C / PRS 101 / PAO1).